Here is a 240-residue protein sequence, read N- to C-terminus: Tumor protein p53-inducible nuclear protein 1 (240 aa).

Positions 25–37 (EKEDDEWILVDFI) match the LIR motif.

As to quaternary structure, interacts with p53/TP53 and HIPK2. Interacts with PRKCG, GABARAP, GABARAPL1, GABARAPL2, MAP1LC3A, MAP1LC3B and MAP1LC3C. As to expression, ubiquitously expressed.

The protein localises to the cytoplasm. It is found in the cytosol. Its subcellular location is the nucleus. The protein resides in the PML body. It localises to the cytoplasmic vesicle. The protein localises to the autophagosome. Functionally, antiproliferative and proapoptotic protein involved in cell stress response which acts as a dual regulator of transcription and autophagy. Acts as a positive regulator of autophagy. In response to cellular stress or activation of autophagy, relocates to autophagosomes where it interacts with autophagosome-associated proteins GABARAP, GABARAPL1/L2, MAP1LC3A/B/C and regulates autophagy. Acts as an antioxidant and plays a major role in p53/TP53-driven oxidative stress response. Possesses both a p53/TP53-independent intracellular reactive oxygen species (ROS) regulatory function and a p53/TP53-dependent transcription regulatory function. Positively regulates p53/TP53 and p73/TP73 and stimulates their capacity to induce apoptosis and regulate cell cycle. In response to double-strand DNA breaks, promotes p53/TP53 phosphorylation on 'Ser-46' and subsequent apoptosis. Acts as a tumor suppressor by inducing cell death by an autophagy and caspase-dependent mechanism. Can reduce cell migration by regulating the expression of SPARC. The polypeptide is Tumor protein p53-inducible nuclear protein 1 (TP53INP1) (Homo sapiens (Human)).